Consider the following 78-residue polypeptide: Cytochrome c oxidase subunit 6b-2 (78 aa).

A CHCH domain is found at 22–65 (TRHCFTRYIEFHRCTTAKGEESNDCERFAKYYRALCPGEWVDKW). Positions 25-35 (CFTRYIEFHRC) match the Cx9C motif motif. Disulfide bonds link Cys-25–Cys-57 and Cys-35–Cys-46. Positions 46–57 (CERFAKYYRALC) match the Cx10C motif motif.

This sequence belongs to the cytochrome c oxidase subunit 6B (TC 3.D.4.8) family. Specifically expressed in roots.

The protein resides in the mitochondrion. This protein is one of the nuclear-coded polypeptide chains of cytochrome c oxidase, the terminal oxidase in mitochondrial electron transport. This protein may be one of the heme-binding subunits of the oxidase. The protein is Cytochrome c oxidase subunit 6b-2 (COX6B-2) of Arabidopsis thaliana (Mouse-ear cress).